Consider the following 139-residue polypeptide: D-ribose pyranase (139 aa).

Catalysis depends on histidine 20, which acts as the Proton donor. Substrate-binding positions include aspartate 28, histidine 106, and 128–130; that span reads YAN.

This sequence belongs to the RbsD / FucU family. RbsD subfamily. In terms of assembly, homodecamer.

The protein resides in the cytoplasm. The catalysed reaction is beta-D-ribopyranose = beta-D-ribofuranose. It functions in the pathway carbohydrate metabolism; D-ribose degradation; D-ribose 5-phosphate from beta-D-ribopyranose: step 1/2. Its function is as follows. Catalyzes the interconversion of beta-pyran and beta-furan forms of D-ribose. In Escherichia coli O127:H6 (strain E2348/69 / EPEC), this protein is D-ribose pyranase.